A 330-amino-acid chain; its full sequence is Ketol-acid reductoisomerase (NADP(+)) (330 aa).

The 181-residue stretch at 1–181 (MNAYYEQDAD…GGTKAGVIET (181 aa)) folds into the KARI N-terminal Rossmann domain. Residues 24-27 (YGSQ), arginine 47, serine 50, serine 52, and 82-85 (DQYQ) contribute to the NADP(+) site. The active site involves histidine 107. Glycine 133 contacts NADP(+). Residues 182 to 327 (TFKNETETDL…SKLRDMMSWL (146 aa)) form the KARI C-terminal knotted domain. Mg(2+) contacts are provided by aspartate 190, glutamate 194, glutamate 226, and glutamate 230. Serine 251 contacts substrate.

It belongs to the ketol-acid reductoisomerase family. Requires Mg(2+) as cofactor.

The catalysed reaction is (2R)-2,3-dihydroxy-3-methylbutanoate + NADP(+) = (2S)-2-acetolactate + NADPH + H(+). The enzyme catalyses (2R,3R)-2,3-dihydroxy-3-methylpentanoate + NADP(+) = (S)-2-ethyl-2-hydroxy-3-oxobutanoate + NADPH + H(+). The protein operates within amino-acid biosynthesis; L-isoleucine biosynthesis; L-isoleucine from 2-oxobutanoate: step 2/4. It functions in the pathway amino-acid biosynthesis; L-valine biosynthesis; L-valine from pyruvate: step 2/4. In terms of biological role, involved in the biosynthesis of branched-chain amino acids (BCAA). Catalyzes an alkyl-migration followed by a ketol-acid reduction of (S)-2-acetolactate (S2AL) to yield (R)-2,3-dihydroxy-isovalerate. In the isomerase reaction, S2AL is rearranged via a Mg-dependent methyl migration to produce 3-hydroxy-3-methyl-2-ketobutyrate (HMKB). In the reductase reaction, this 2-ketoacid undergoes a metal-dependent reduction by NADPH to yield (R)-2,3-dihydroxy-isovalerate. In Chlorobium limicola (strain DSM 245 / NBRC 103803 / 6330), this protein is Ketol-acid reductoisomerase (NADP(+)).